The primary structure comprises 834 residues: Structure-specific endonuclease subunit SLX4 (834 aa).

Disordered stretches follow at residues 80-105 (RVPR…KTTT), 272-307 (TVPA…QKGK), 332-372 (QNVA…GRPV), 401-421 (GYPE…SNSA), 603-649 (ESKP…AKAL), and 720-740 (ATPN…SIEP). Residues 279-295 (PTESSTTEDVQGSSSKQ) are compositionally biased toward polar residues. Over residues 296–305 (QRVKAKKPQK) the composition is skewed to basic residues. 2 stretches are compositionally biased toward polar residues: residues 345–366 (SNRP…TLKN) and 412–421 (DTQNSPSNSA). Over residues 611–630 (DDARKNGFRKENHSDVRVRP) the composition is skewed to basic and acidic residues. A compositionally biased stretch (low complexity) spans 729–740 (QGSSSASFSIEP).

This sequence belongs to the SLX4 family. In terms of assembly, forms a heterodimer with SLX1. Phosphorylated in response to DNA damage.

The protein localises to the nucleus. In terms of biological role, regulatory subunit of the SLX1-SLX4 structure-specific endonuclease that resolves DNA secondary structures generated during DNA repair and recombination. Has endonuclease activity towards branched DNA substrates, introducing single-strand cuts in duplex DNA close to junctions with ss-DNA. This chain is Structure-specific endonuclease subunit SLX4, found in Ajellomyces capsulatus (strain NAm1 / WU24) (Darling's disease fungus).